The following is a 203-amino-acid chain: Orotate phosphoribosyltransferase (203 aa).

Residues R94, K98, H100, and 120–128 (EDLISTGGS) contribute to the 5-phospho-alpha-D-ribose 1-diphosphate site. S124 is an orotate binding site.

This sequence belongs to the purine/pyrimidine phosphoribosyltransferase family. PyrE subfamily. As to quaternary structure, homodimer. Requires Mg(2+) as cofactor.

It catalyses the reaction orotidine 5'-phosphate + diphosphate = orotate + 5-phospho-alpha-D-ribose 1-diphosphate. It participates in pyrimidine metabolism; UMP biosynthesis via de novo pathway; UMP from orotate: step 1/2. Functionally, catalyzes the transfer of a ribosyl phosphate group from 5-phosphoribose 1-diphosphate to orotate, leading to the formation of orotidine monophosphate (OMP). The chain is Orotate phosphoribosyltransferase from Staphylococcus epidermidis (strain ATCC 35984 / DSM 28319 / BCRC 17069 / CCUG 31568 / BM 3577 / RP62A).